Reading from the N-terminus, the 386-residue chain is Phosphatidyl-myo-inositol mannosyltransferase (386 aa).

Positions 9 and 16 each coordinate GDP-alpha-D-mannose. A 1,2-diacyl-sn-glycero-3-phospho-(1D-myo-inositol)-binding positions include Gln-18, 62–63, and Arg-68; that span reads YN. GDP-alpha-D-mannose is bound by residues Arg-196, 201-202, 251-253, Lys-256, 274-278, and Glu-282; these read RK, VDD, and ESFGI.

It belongs to the glycosyltransferase group 1 family. Glycosyltransferase 4 subfamily. As to quaternary structure, monomer. The cofactor is Mg(2+).

It is found in the cell membrane. The catalysed reaction is a 1,2-diacyl-sn-glycero-3-phospho-(1D-myo-inositol) + GDP-alpha-D-mannose = a 1,2-diacyl-sn-glycero-3-phospho-[alpha-D-mannopyranosyl-(1&lt;-&gt;6)-D-myo-inositol] + GDP + H(+). Its pathway is phospholipid metabolism; phosphatidylinositol metabolism. Involved in the biosynthesis of phosphatidyl-myo-inositol mannosides (PIM) which are early precursors in the biosynthesis of lipomannans (LM) and lipoarabinomannans (LAM). Catalyzes the addition of a mannosyl residue from GDP-D-mannose (GDP-Man) to the position 2 of the carrier lipid phosphatidyl-myo-inositol (PI) to generate a phosphatidyl-myo-inositol bearing an alpha-1,2-linked mannose residue (PIM1). In contrary to PimB, the mannosyltransferase PimA is unable to transfer a mannose residue to the position 6 of the phosphatidyl-myo-inositol of PIM1. This is Phosphatidyl-myo-inositol mannosyltransferase from Mycolicibacterium smegmatis (strain ATCC 700084 / mc(2)155) (Mycobacterium smegmatis).